The sequence spans 86 residues: Large ribosomal subunit protein bL27c (86 aa).

The disordered stretch occupies residues 1–27 (MAHKKGSGSTRNGRDSNSKRLGVKKYG).

Belongs to the bacterial ribosomal protein bL27 family.

The protein resides in the plastid. It localises to the chloroplast. The polypeptide is Large ribosomal subunit protein bL27c (Pyropia yezoensis (Susabi-nori)).